Consider the following 710-residue polypeptide: Interferon-induced GTP-binding protein Mx2 (710 aa).

The tract at residues 1–51 is disordered; it reads MSMSFRPLKYKRHTQTSTQHHPKQDIYFHQQPPGPPLGQTMSPPQWQVEES. Residues 39–50 are compositionally biased toward polar residues; the sequence is QTMSPPQWQVEE. Residues 112 to 383 enclose the Dynamin-type G domain; the sequence is DLALPAIAVI…LIWHINKSLP (272 aa). Positions 122–129 are G1 motif; the sequence is GDQSSGKS. Residue 122–129 participates in GTP binding; that stretch reads GDQSSGKS. The tract at residues 147–149 is G2 motif; sequence ITR. A G3 motif region spans residues 221 to 224; that stretch reads DLPG. GTP-binding positions include 221–225 and 290–293; these read DLPGI and TKPD. The G4 motif stretch occupies residues 290–293; that stretch reads TKPD. The interval 322-325 is G5 motif; it reads KCRG. One can recognise a GED domain in the interval 619–710; the sequence is IVEIGVHLNA…ALYEFPHFKG (92 aa).

This sequence belongs to the TRAFAC class dynamin-like GTPase superfamily. Dynamin/Fzo/YdjA family.

It localises to the cytoplasm. It is found in the nucleus. Interferon-induced dynamin-like GTPase with antiviral activity against vesicular stomatitis virus (VSV). The chain is Interferon-induced GTP-binding protein Mx2 (MX2) from Bos taurus (Bovine).